The following is a 52-amino-acid chain: Large ribosomal subunit protein eL39 (52 aa).

This sequence belongs to the eukaryotic ribosomal protein eL39 family.

This chain is Large ribosomal subunit protein eL39, found in Caldivirga maquilingensis (strain ATCC 700844 / DSM 13496 / JCM 10307 / IC-167).